Reading from the N-terminus, the 428-residue chain is Serine--tRNA ligase (428 aa).

235-237 is a binding site for L-serine; that stretch reads TAE. 266-268 contacts ATP; that stretch reads RSE. An L-serine-binding site is contributed by Glu-289. 353–356 lines the ATP pocket; sequence EISS. An L-serine-binding site is contributed by Ser-389.

Belongs to the class-II aminoacyl-tRNA synthetase family. Type-1 seryl-tRNA synthetase subfamily. Homodimer. The tRNA molecule binds across the dimer.

The protein localises to the cytoplasm. It catalyses the reaction tRNA(Ser) + L-serine + ATP = L-seryl-tRNA(Ser) + AMP + diphosphate + H(+). The catalysed reaction is tRNA(Sec) + L-serine + ATP = L-seryl-tRNA(Sec) + AMP + diphosphate + H(+). The protein operates within aminoacyl-tRNA biosynthesis; selenocysteinyl-tRNA(Sec) biosynthesis; L-seryl-tRNA(Sec) from L-serine and tRNA(Sec): step 1/1. Catalyzes the attachment of serine to tRNA(Ser). Is also able to aminoacylate tRNA(Sec) with serine, to form the misacylated tRNA L-seryl-tRNA(Sec), which will be further converted into selenocysteinyl-tRNA(Sec). This chain is Serine--tRNA ligase, found in Shewanella piezotolerans (strain WP3 / JCM 13877).